A 152-amino-acid chain; its full sequence is Deoxyuridine 5'-triphosphate nucleotidohydrolase (152 aa).

Substrate is bound by residues 71-73, Asn-84, and 88-90; these read RSG and LID.

The protein belongs to the dUTPase family. Requires Mg(2+) as cofactor.

The catalysed reaction is dUTP + H2O = dUMP + diphosphate + H(+). The protein operates within pyrimidine metabolism; dUMP biosynthesis; dUMP from dCTP (dUTP route): step 2/2. Its function is as follows. This enzyme is involved in nucleotide metabolism: it produces dUMP, the immediate precursor of thymidine nucleotides and it decreases the intracellular concentration of dUTP so that uracil cannot be incorporated into DNA. The polypeptide is Deoxyuridine 5'-triphosphate nucleotidohydrolase (Xanthomonas campestris pv. campestris (strain 8004)).